The chain runs to 205 residues: Protein DEPP1 (205 aa).

2 stretches are compositionally biased toward polar residues: residues 55–64 (DKVTAQSRPN) and 83–101 (GDSS…SPGT). The segment at 55–171 (DKVTAQSRPN…RHQTSDLKSW (117 aa)) is disordered. A compositionally biased stretch (basic and acidic residues) spans 138 to 155 (MGKDTGRLCEARVPEHSL).

Its subcellular location is the cytoplasm. It is found in the peroxisome. The protein localises to the mitochondrion. Acts as a critical modulator of FOXO3-induced autophagy via increased cellular ROS. In Mus musculus (Mouse), this protein is Protein DEPP1 (Depp1).